The primary structure comprises 154 residues: 17.8 kDa class I heat shock protein (154 aa).

Positions 40–154 (ESSAFANTRI…PEVKSIEISG (115 aa)) constitute a sHSP domain.

The protein belongs to the small heat shock protein (HSP20) family. As to quaternary structure, forms oligomeric structures.

It is found in the cytoplasm. This Solanum lycopersicum (Tomato) protein is 17.8 kDa class I heat shock protein.